The sequence spans 570 residues: Apyrase (570 aa).

The N-terminal stretch at 1-23 is a signal peptide; it reads MALVRFATIITVLCHLAIQDGAA. Residues D43, H45, and D94 each coordinate a divalent metal cation. Residue N108 is glycosylated (N-linked (GlcNAc...) asparagine). Residues N126, H229, and H253 each coordinate a divalent metal cation. N-linked (GlcNAc...) asparagine glycosylation is found at N287 and N326. R367 is a binding site for AMP. The N-linked (GlcNAc...) asparagine glycan is linked to N387. The AMP site is built by R402 and D507. Residues N552 and N555 are each glycosylated (N-linked (GlcNAc...) asparagine).

It belongs to the 5'-nucleotidase family. As to quaternary structure, interacts with human PLAT; the interaction results in PLAT activation probably via an allosteric activation mechanism. Requires a divalent metal cation as cofactor. As to expression, saliva (at protein level). Salivary gland (at protein level). Not detected in midgut.

It localises to the secreted. The catalysed reaction is a ribonucleoside 5'-triphosphate + 2 H2O = a ribonucleoside 5'-phosphate + 2 phosphate + 2 H(+). Cleaves adenosine triphosphate (ATP) and adenosine diphosphate (ADP) to adenosine monophosphate (AMP) and inorganic phosphate. Enhances fibrin degradation in the midgut blood bolus. Activates human tissue plasminogen activator (PLAT), probably via an allosteric activation mechanism. Inhibits ADP-mediated host platelet aggregation in vitro and in mosquito midgut. Inhibits host neutrophil activation in the mosquito midgut: reduces neutrophil extracellular traps formation in the presence of platelets and the formation of total cell- and mitochondrial-derived reactive oxygen species. Its function is as follows. (Microbial infection) Promotes Plasmodium berghei parasite transmission from the mammalian host to the mosquito probably by reducing the blood bolus viscosity. Facilitates sporozoite transmission from the mosquito to the mammalian host during blood feeding. This Anopheles gambiae (African malaria mosquito) protein is Apyrase.